Consider the following 411-residue polypeptide: Secretion apparatus protein BsaZ (411 aa).

4 consecutive transmembrane segments (helical) span residues 28–48 (IVAL…VDLT), 80–100 (IAAP…LVQS), 137–157 (ALLY…LYHA), and 175–195 (IVLT…VLIL). The segment at 341–411 (AANRGGPPPE…APARTGDQNA (71 aa)) is disordered. Positions 370-404 (DACADNAFPDDAPPGAAAPNAGSPDGPAPDGGAPA) are enriched in low complexity.

This sequence belongs to the type III secretion exporter family.

It is found in the cell membrane. In terms of biological role, part of the bsa type III secretion system, is involved in the intracellular replication of invading bacteria inside the host cell. Probably necessary for the lysis of the vacuole membrane and escape into the host cell cytoplasm. This chain is Secretion apparatus protein BsaZ (bsaZ), found in Burkholderia pseudomallei (strain 1710b).